A 135-amino-acid polypeptide reads, in one-letter code: C-type lectin Cal (135 aa).

Intrachain disulfides connect cysteine 3–cysteine 14, cysteine 31–cysteine 131, cysteine 38–cysteine 133, and cysteine 106–cysteine 123. Residues 10–132 (MNGLCYKIFN…CESKDAFLCQ (123 aa)) enclose the C-type lectin domain. Glutamine 96, aspartate 98, glutamate 104, asparagine 119, and aspartate 120 together coordinate Ca(2+). Positions 96–98 (QPD) match the Galactose-binding motif.

This sequence belongs to the true venom lectin family. As to quaternary structure, homodecamer of disulfide-linked dimers arranged in two pseudo-5-fold symmetric pentamers. Expressed by the venom gland.

The protein localises to the secreted. Functionally, galactose-binding protein which recognizes specific carbohydrate structures and agglutinates a variety of animal cells by binding to cell-surface glycoproteins and glycolipids. Calcium-dependent lectin. Shows high hemagglutinating activity (MHC=10 ng/ml). The protein is C-type lectin Cal of Crotalus atrox (Western diamondback rattlesnake).